A 132-amino-acid polypeptide reads, in one-letter code: Small ribosomal subunit protein uS11 (132 aa).

This sequence belongs to the universal ribosomal protein uS11 family. As to quaternary structure, part of the 30S ribosomal subunit. Interacts with proteins S7 and S18. Binds to IF-3.

In terms of biological role, located on the platform of the 30S subunit, it bridges several disparate RNA helices of the 16S rRNA. Forms part of the Shine-Dalgarno cleft in the 70S ribosome. The chain is Small ribosomal subunit protein uS11 from Oenococcus oeni (strain ATCC BAA-331 / PSU-1).